Here is a 648-residue protein sequence, read N- to C-terminus: Macrolide export ATP-binding/permease protein MacB (648 aa).

The ABC transporter domain occupies 6–251 (IRVRGVSRAF…GPSAGWRGAI (246 aa)). 42–49 (GASGSGKS) contacts ATP. 4 helical membrane passes run 273–293 (LLTM…SALG), 528–548 (VAVI…LVSV), 572–592 (FLIE…MLAL), and 613–633 (SIIV…FLPA).

It belongs to the ABC transporter superfamily. Macrolide exporter (TC 3.A.1.122) family. Homodimer.

It localises to the cell inner membrane. Non-canonical ABC transporter that contains transmembrane domains (TMD), which form a pore in the inner membrane, and an ATP-binding domain (NBD), which is responsible for energy generation. Confers resistance against macrolides. The protein is Macrolide export ATP-binding/permease protein MacB of Agrobacterium fabrum (strain C58 / ATCC 33970) (Agrobacterium tumefaciens (strain C58)).